The following is a 230-amino-acid chain: MSGSGGKGGGRGGLHVRVKTAKRRSVSSTRWLQRQLNDPYVRRAQAEGYRSRAAYKLIELDEKFGLLKKSRAVVDLGIAPGGWSQVVRKANPRARVAGIDLLPCEPIEGVAILEMDFMDDAAPDALIAALGGAPDLVISDMAANTVGHPQTDHLRTIGLAETAADFAVRNLLPGGAFVAKVFAGGADRELLTLLKRHFTTVKHAKPPASRKGSPELYVIAQGFKGRGDAA.

The segment covering 1–13 (MSGSGGKGGGRGG) has biased composition (gly residues). The segment at 1–22 (MSGSGGKGGGRGGLHVRVKTAK) is disordered. Residues G81, W83, D100, D116, and D140 each contribute to the S-adenosyl-L-methionine site. K180 serves as the catalytic Proton acceptor.

This sequence belongs to the class I-like SAM-binding methyltransferase superfamily. RNA methyltransferase RlmE family.

The protein localises to the cytoplasm. It catalyses the reaction uridine(2552) in 23S rRNA + S-adenosyl-L-methionine = 2'-O-methyluridine(2552) in 23S rRNA + S-adenosyl-L-homocysteine + H(+). In terms of biological role, specifically methylates the uridine in position 2552 of 23S rRNA at the 2'-O position of the ribose in the fully assembled 50S ribosomal subunit. In Sphingopyxis alaskensis (strain DSM 13593 / LMG 18877 / RB2256) (Sphingomonas alaskensis), this protein is Ribosomal RNA large subunit methyltransferase E.